A 381-amino-acid chain; its full sequence is Chaperone protein DnaJ (381 aa).

The J domain occupies 5-69; it reads DYYEVLGVSK…EKRARYDRFG (65 aa). The segment at 136-218 adopts a CR-type zinc-finger fold; sequence GKETEIEVPH…CGGTGHVKKR (83 aa). Cys-149, Cys-152, Cys-166, Cys-169, Cys-192, Cys-195, Cys-206, and Cys-209 together coordinate Zn(2+). 4 CXXCXGXG motif repeats span residues 149–156, 166–173, 192–199, and 206–213; these read CDTCHGSG, CPHCHGSG, CPVCGGTG, and CPTCGGTG. The disordered stretch occupies residues 154–174; sequence GSGAKPGTSPQSCPHCHGSGQ.

Belongs to the DnaJ family. Homodimer. Requires Zn(2+) as cofactor.

It localises to the cytoplasm. Functionally, participates actively in the response to hyperosmotic and heat shock by preventing the aggregation of stress-denatured proteins and by disaggregating proteins, also in an autonomous, DnaK-independent fashion. Unfolded proteins bind initially to DnaJ; upon interaction with the DnaJ-bound protein, DnaK hydrolyzes its bound ATP, resulting in the formation of a stable complex. GrpE releases ADP from DnaK; ATP binding to DnaK triggers the release of the substrate protein, thus completing the reaction cycle. Several rounds of ATP-dependent interactions between DnaJ, DnaK and GrpE are required for fully efficient folding. Also involved, together with DnaK and GrpE, in the DNA replication of plasmids through activation of initiation proteins. In Geobacillus thermodenitrificans (strain NG80-2), this protein is Chaperone protein DnaJ.